The chain runs to 953 residues: Serine-aspartate repeat-containing protein C (953 aa).

The N-terminal stretch at 1 to 50 (MNNKKTATNRKGMIPNRLNKFSIRKYSVGTASILVGTTLIFGLSGHEAKA) is a signal peptide. Residues 51–160 (AEHTNGELNQ…AKNVSTTPKT (110 aa)) are disordered. The tract at residues 51-495 (AEHTNGELNQ…GSSTANGDQK (445 aa)) is ligand binding A region. A compositionally biased stretch (polar residues) spans 56 to 71 (GELNQSKNETTAPSEN). The segment covering 72 to 83 (KTTEKVDSRQLK) has biased composition (basic and acidic residues). The segment covering 84–114 (DNTQTATADQPKVTMSDSATVKETSSNMQSP) has biased composition (polar residues). A compositionally biased stretch (low complexity) spans 115–132 (QNATASQSTTQTSNVTTN). Polar residues predominate over residues 133-160 (DKSSTTYSNETDKSNLTQAKNVSTTPKT). CNA-B domains are found at residues 496-606 (KYNL…YKTP) and 607-717 (KYSL…EEET). A disordered region spans residues 678-933 (TQTGTNTTED…NNSNNGTLFG (256 aa)). Composition is skewed to acidic residues over residues 685-695 (TEDDKDADGGE) and 712-892 (YYEE…DSDS). The LPXTG sorting signal motif lies at 916-920 (LPETG). Low complexity predominate over residues 918 to 933 (ETGSENNNSNNGTLFG). Threonine 919 is modified (pentaglycyl murein peptidoglycan amidated threonine). The propeptide at 920–953 (GSENNNSNNGTLFGGLFAALGSLLLFGRRKKQNK) is removed by sortase.

It belongs to the serine-aspartate repeat-containing protein (SDr) family. Homodimerizes; via N2-Domain. Interacts with host NRXN1; this interaction mediates bacterial attachment to host cells.

The protein resides in the secreted. It localises to the cell wall. Cell surface-associated calcium-binding protein which plays an important role in adhesion and pathogenesis. Mediates interactions with components of the extracellular matrix such as host NRXN1 to promote bacterial adhesion. The chain is Serine-aspartate repeat-containing protein C (sdrC) from Staphylococcus aureus (strain Mu50 / ATCC 700699).